A 649-amino-acid polypeptide reads, in one-letter code: Arylsulfatase (649 aa).

The N-terminal stretch at 1 to 22 (MLQRLVVALCLLGFAALTAAAA) is a signal peptide. Ca(2+) contacts are provided by Asp34 and Asp35. An N-linked (GlcNAc...) asparagine glycan is attached at Asn41. Cys72 is a binding site for Ca(2+). Cys72 functions as the Nucleophile in the catalytic mechanism. Cys72 carries the post-translational modification 3-oxoalanine (Cys). 3 N-linked (GlcNAc...) asparagine glycosylation sites follow: Asn89, Asn224, and Asn279. Positions 324 and 325 each coordinate Ca(2+). 3 N-linked (GlcNAc...) asparagine glycosylation sites follow: Asn445, Asn489, and Asn531.

The protein belongs to the sulfatase family. Ca(2+) serves as cofactor. In terms of processing, the conversion to 3-oxoalanine (also known as C-formylglycine, FGly), of a serine or cysteine residue in prokaryotes and of a cysteine residue in eukaryotes, is critical for catalytic activity.

It is found in the periplasm. It catalyses the reaction an aryl sulfate + H2O = a phenol + sulfate + H(+). Inhibited by Na(3)BO(3) and KCN. No inhibition by sodium dodecyl sulfate, even at high concentration. Functionally, is commonly produced by soil microorganisms and plays an important role in the mineralization of sulfates. The chain is Arylsulfatase from Volvox carteri (Green alga).